A 461-amino-acid chain; its full sequence is Propionyl-CoA carboxylase regulator (461 aa).

In terms of domain architecture, HTH cro/C1-type spans 11–65 (LRELRVKLGLTQKVFAERLGASLPYLNQMENNHRPVSATVVLALAQEFGVDVTKL). Positions 22–41 (QKVFAERLGASLPYLNQMEN) form a DNA-binding region, H-T-H motif.

It belongs to the short-chain fatty acyl-CoA assimilation regulator (ScfR) family.

Transcriptional regulator that controls propionyl-CoA assimilation through the methylmalonyl-CoA pathway via regulation of pccB expression. The sequence is that of Propionyl-CoA carboxylase regulator from Cereibacter sphaeroides (strain ATCC 17023 / DSM 158 / JCM 6121 / CCUG 31486 / LMG 2827 / NBRC 12203 / NCIMB 8253 / ATH 2.4.1.) (Rhodobacter sphaeroides).